A 156-amino-acid polypeptide reads, in one-letter code: Arginine repressor (156 aa).

Belongs to the ArgR family.

Its subcellular location is the cytoplasm. The protein operates within amino-acid biosynthesis; L-arginine biosynthesis [regulation]. Regulates arginine biosynthesis genes. In Shewanella sp. (strain ANA-3), this protein is Arginine repressor.